A 1699-amino-acid polypeptide reads, in one-letter code: Genome polyprotein (1699 aa).

Low complexity predominate over residues 1 to 19; that stretch reads MKMASNDASAAAVVNSNND. The segment at 1–78 is disordered; it reads MKMASNDASA…PPPPPNGEDE (78 aa). The interval 1 to 116 is interaction with host MAP1LC3A/LC3; the sequence is MKMASNDASA…AFSVPPLNQR (116 aa). Pro residues predominate over residues 46–74; the sequence is QPPPRETPQRPPRPPTPELVKKIPPPPPN. The interval 117-330 is interaction with NTPase; sequence ENRDAKEPLT…APLLGDYELQ (214 aa). Residues 233–330 form an interaction with NS4 region; the sequence is RPYQDWNRKP…APLLGDYELQ (98 aa). Host ER membrane association regions lie at residues 250 to 281 and 292 to 330; these read KLKK…RPLN and TFAG…YELQ. Positions 331-509 are interaction with NS1-2, NS4 and homooligomerization; sequence GPEDLAVELV…GKTHLARELA (179 aa). Residues 465–632 form the SF3 helicase domain; the sequence is LARIAAARSL…EKAKRDFPGQ (168 aa). Position 495-502 (495-502) interacts with ATP; that stretch reads GKPGIGKT. The segment at 586–691 is important for mitochondrion targeting; that stretch reads AIIITTNLAN…ASGLLHERLD (106 aa). A functions as endoplasmic reticulum export signal region spans residues 764–770; the sequence is YTLESDG. The host membrane association stretch occupies residues 801 to 850; that stretch reads RIRYYVKCVQEALYSIIQIAGAAFVTTRIVKRMNIQDLWSKPQVEDTEDT. Residues 843–894 are disordered; sequence QVEDTEDTANKDGCPKPKDDEEFVVSSDDIKTEGKKGKNKTGRGKKHTAFSS. A compositionally biased stretch (basic and acidic residues) spans 850–861; sequence TANKDGCPKPKD. The span at 879 to 890 shows a compositional bias: basic residues; that stretch reads GKNKTGRGKKHT. Residues 899–904 are acidic; that stretch reads DEEYDE. Residue tyrosine 902 is modified to O-(5'-phospho-RNA)-tyrosine. An interaction with host EIF4G region spans residues 992-1008; the sequence is WADDDRSVDYNEKLDFE. Residues 1009-1189 enclose the Peptidase C37 domain; sequence APPSIWSRIV…QGSEGEATLE (181 aa). Active-site for 3CLpro activity residues include histidine 1038, glutamate 1062, and cysteine 1147. The region spanning 1425 to 1546 is the RdRp catalytic domain; that stretch reads KYHYDADYSR…STDINLNPEK (122 aa). The Mg(2+) site is built by aspartate 1429, aspartate 1431, aspartate 1533, and glutamate 1534.

In terms of assembly, homodimer. Homooligomer. Interacts with NTPase; this interaction increases the proapoptotic activity of the NTPase and is crucial for the formation of the viral replication complex. Interacts with NS4; this interaction is crucial for the formation of the viral replication complex. Interacts (via N-terminus) with host VAPA. Interacts with host MAP1LC3A/LC3; this interaction does not seem to be linked to host autophagy, but rather plays a role in the formation of viral factories. Homooligomer. Interacts with NS1-2; this interaction increases the proapoptotic activity of the NTPase and is crucial for the formation of the viral replication complex. Interacts with NS4; this interaction increases the proapoptotic activity of the NTPase. As to quaternary structure, homodimer. Monomer; in solution. In terms of assembly, interacts with NTPase; this interaction increases the proapoptotic activity of the NTPase. Interacts with NS1-2; this interaction is crucial for the formation of the viral replication complex. Monomer. Interacts with the RNA-directed RNA polymerase; this interaction induces the multimerization of the RdRp and enhances its activity. Interacts with host IEF4G1; this interaction plays a role in translation of viral proteins. As to quaternary structure, homohexamer; also forms fibrous hexameric oligomer. Interacts with the viral genome-linked protein; this interaction induces the multimerization of the RdRp and enhances its activity. Mg(2+) serves as cofactor. Requires Mn(2+) as cofactor. Specific enzymatic cleavages in vivo yield mature proteins. 3CLpro is first autocatalytically cleaved, then processes the whole polyprotein. NS1/2-3 and NS3-4 sites are cleaved rapidly and NS4-5, NS5-6, and NS6-7 sites are processed subsequently and less efficiently. In terms of processing, VPg is uridylylated by the polymerase and is covalently attached to the 5'-end of the polyadenylated genomic and subgenomic RNAs. This uridylylated form acts as a nucleotide-peptide primer for the polymerase. Post-translationally, cleaved by host CASP3/caspase 3 at 18-22 h.p.i. The cleavage allows NS1 secretion, which is essential for intestinal infection and resistance to IFN-lambda.

It is found in the host endoplasmic reticulum membrane. Its subcellular location is the secreted. The protein resides in the host mitochondrion. It localises to the host Golgi apparatus membrane. The protein localises to the host cytoplasm. It is found in the host perinuclear region. The enzyme catalyses a ribonucleoside 5'-triphosphate + H2O = a ribonucleoside 5'-diphosphate + phosphate + H(+). It catalyses the reaction Endopeptidase with a preference for cleavage when the P1 position is occupied by Glu-|-Xaa and the P1' position is occupied by Gly-|-Yaa.. The catalysed reaction is RNA(n) + a ribonucleoside 5'-triphosphate = RNA(n+1) + diphosphate. In terms of biological role, induces the proliferation of the host smooth ER membranes forming long tubular structures. These remodeled membranes probably form the viral factories that contain the replication complex. May play a role in viral replication by interacting with host VAPA, a vesicle-associated membrane protein that plays a role in SNARE-mediated vesicle fusion. This interaction may target replication complex to intracellular membranes. Its function is as follows. Displays NTPase activity, but no helicase activity. Displays RNA chaperone-like activity and destabilizes dsRNA. Induces the formation of convoluted membranes derived from the host ER. These remodeled membranes probably form the viral factories that contain the replication complex. Initiates host cell death by targeting the mitochondrial outer membrane, leading to the permeabilization of mitochondria, programmed host cell death and viral egress. Externalization of host cardiolipin seems to be involved in the process. Probably plays a role in preventing the assembly of host stress granules. Functionally, probable key protein responsible for the formation of membrane alterations by the virus. Induces the formation of convoluted membranes derived from the host ER. These remodeled membranes probably form the viral factories that contain the replication complex. May play a role in targeting replication complex to intracellular membranes. Viral genome-linked protein is covalently linked to the 5'-end of the positive-strand, negative-strand genomic RNAs and subgenomic RNA. Acts as a genome-linked replication primer. May recruit ribosome to viral RNA thereby promoting viral proteins translation. Interacts with host translation initiation complex to allow the translation of viral proteins. Induces the formation of aggregates of RNA-directed RNA polymerase in the presence of RNA. Through its interaction with the viral RNA-directed RNA polymerase, plays a crucial role in enhancing the polymerase activity. In terms of biological role, processes the polyprotein. 3CLpro-RdRp is first released by autocleavage, then all other proteins are cleaved. May cleave polyadenylate-binding protein thereby inhibiting cellular translation. Its function is as follows. Replicates genomic and antigenomic RNA by recognizing replications specific signals. Also transcribes a subgenomic mRNA by initiating RNA synthesis internally on antigenomic RNA. This sgRNA codes for structural proteins. Catalyzes the covalent attachment VPg with viral RNAs. The polypeptide is Genome polyprotein (Lordsdale virus (strain GII/Human/United Kingdom/Lordsdale/1993) (Human enteric calicivirus)).